A 343-amino-acid polypeptide reads, in one-letter code: Small ribosomal subunit biogenesis GTPase RsgA (343 aa).

The CP-type G domain occupies Arg-116 to Phe-275. GTP is bound by residues Asn-163–Asp-166 and Gly-217–Ser-225. Residues Cys-299, Cys-304, His-306, and Cys-312 each coordinate Zn(2+).

The protein belongs to the TRAFAC class YlqF/YawG GTPase family. RsgA subfamily. In terms of assembly, monomer. Associates with 30S ribosomal subunit, binds 16S rRNA. The cofactor is Zn(2+).

The protein resides in the cytoplasm. Its function is as follows. One of several proteins that assist in the late maturation steps of the functional core of the 30S ribosomal subunit. Helps release RbfA from mature subunits. May play a role in the assembly of ribosomal proteins into the subunit. Circularly permuted GTPase that catalyzes slow GTP hydrolysis, GTPase activity is stimulated by the 30S ribosomal subunit. The chain is Small ribosomal subunit biogenesis GTPase RsgA from Ectopseudomonas mendocina (strain ymp) (Pseudomonas mendocina).